Consider the following 575-residue polypeptide: Proline--tRNA ligase (575 aa).

This sequence belongs to the class-II aminoacyl-tRNA synthetase family. ProS type 1 subfamily. In terms of assembly, homodimer.

The protein localises to the cytoplasm. The enzyme catalyses tRNA(Pro) + L-proline + ATP = L-prolyl-tRNA(Pro) + AMP + diphosphate. Catalyzes the attachment of proline to tRNA(Pro) in a two-step reaction: proline is first activated by ATP to form Pro-AMP and then transferred to the acceptor end of tRNA(Pro). As ProRS can inadvertently accommodate and process non-cognate amino acids such as alanine and cysteine, to avoid such errors it has two additional distinct editing activities against alanine. One activity is designated as 'pretransfer' editing and involves the tRNA(Pro)-independent hydrolysis of activated Ala-AMP. The other activity is designated 'posttransfer' editing and involves deacylation of mischarged Ala-tRNA(Pro). The misacylated Cys-tRNA(Pro) is not edited by ProRS. The sequence is that of Proline--tRNA ligase from Solidesulfovibrio magneticus (strain ATCC 700980 / DSM 13731 / RS-1) (Desulfovibrio magneticus).